Consider the following 371-residue polypeptide: Phosphatase IMPL1, chloroplastic (371 aa).

The N-terminal 60 residues, 1–60, are a transit peptide targeting the chloroplast; it reads MGRSLIFSGNMSLRISHLPRSSLPLQNPISGRTVNRTFRYRCTRILSNSFKSTTRLQTKA. Val-61 carries the N-acetylvaline modification. Glu-148, Asp-165, Leu-167, and Asp-168 together coordinate Mg(2+). Glu-148 contributes to the substrate binding site. Substrate is bound by residues 167–170, 273–275, Glu-292, and Asp-299; these read LDGT and GAA. Asp-299 contacts Mg(2+).

This sequence belongs to the inositol monophosphatase superfamily. The cofactor is Mg(2+). Ubiquitous. Expressed in pistil and seed endosperm.

It is found in the plastid. Its subcellular location is the chloroplast stroma. The catalysed reaction is a myo-inositol phosphate + H2O = myo-inositol + phosphate. The protein operates within polyol metabolism; myo-inositol biosynthesis; myo-inositol from D-glucose 6-phosphate: step 2/2. Phosphatase acting preferentially on D-myoinositol 1-phosphate (D-Ins 1-P). This is Phosphatase IMPL1, chloroplastic (IMPL1) from Arabidopsis thaliana (Mouse-ear cress).